A 339-amino-acid chain; its full sequence is tRNA pseudouridine synthase D (339 aa).

D80 acts as the Nucleophile in catalysis. The TRUD domain maps to 155–311 (GFPNYFTEQR…AKGFSWAFEP (157 aa)).

This sequence belongs to the pseudouridine synthase TruD family.

The enzyme catalyses uridine(13) in tRNA = pseudouridine(13) in tRNA. In terms of biological role, responsible for synthesis of pseudouridine from uracil-13 in transfer RNAs. In Haemophilus influenzae (strain 86-028NP), this protein is tRNA pseudouridine synthase D.